A 197-amino-acid chain; its full sequence is NADH-quinone oxidoreductase subunit C (197 aa).

This sequence belongs to the complex I 30 kDa subunit family. In terms of assembly, NDH-1 is composed of 14 different subunits. Subunits NuoB, C, D, E, F, and G constitute the peripheral sector of the complex.

It is found in the cell inner membrane. The enzyme catalyses a quinone + NADH + 5 H(+)(in) = a quinol + NAD(+) + 4 H(+)(out). In terms of biological role, NDH-1 shuttles electrons from NADH, via FMN and iron-sulfur (Fe-S) centers, to quinones in the respiratory chain. The immediate electron acceptor for the enzyme in this species is believed to be ubiquinone. Couples the redox reaction to proton translocation (for every two electrons transferred, four hydrogen ions are translocated across the cytoplasmic membrane), and thus conserves the redox energy in a proton gradient. This Neisseria meningitidis serogroup B (strain ATCC BAA-335 / MC58) protein is NADH-quinone oxidoreductase subunit C.